Here is a 1032-residue protein sequence, read N- to C-terminus: MEAAAAVVAAEAEVENEDGDSSCGDVCFMDKGLQSISELSLDSTLHAVNLHCNNISKIEAIDHIWNLQHLDLSSNQISRIEGLNTLTKLCTLNLSCNLITKVEGLEELINLTRLNVSYNHIDDLSGLIPLHGIKHKLRYIDLHSNRIDSIHHLLQCMVGLHFLTNLILEKDGDDNPVCRLPGYRAVILQTLPQLRILDCKNIFGEPVNLTEINSSQLQCLEGLLDNLVSSDSPLNISEDEIIDRMPVITAPIDELVPLEQFASTPSDAVLTSFMSVCQSSEPEKNNHENDLQNEIKLQKLDDQILQLLNETSNSIDNVLEKDPRPKRDTDITSESDYGNRKECNRKVPRRSKIPYDAKTIQTIKHHNKNYNSFVSCNRKMKPPYLKELYVSSSLANCPMLQESEKPKTEIIKVDQSHSEDNTYQSLVEQLDQEREKRWRAEQAENKLMDYIDELHKHANEKEDIHSLALLTTDRLKEIIFRERNSKGQLEVMVHKLQNEIKKLTVELMKAKDQQEDHLKHLRTLEKTLEKMERQKRQQQAAQIRLIQEVELKASAADREIYLLRTSLHREREQAQQLHQLLALKEQEHRKELETREFFTDADFQDALAKEIAKEEKKHEQMIKEYQEKIDVLSQQYMDLENEFRIALTVEARRFQDVKDGFENVATELAKSKHALIWAQRKENESSSLIKDLTCMVKEQKTKLAEVSKLKQETAANLQNQINTLEILIEDDKQKSIQIELLKHEKVQLISELAAKESLIFGLRTERKVWGHELAQQGSSLAQNRGKLEAQIESLSRENECLRKTNESDSDALRIKCKIIDDQTETIRKLKDCLQEKDEHIKRLQEKITEIEKCTQEQLDEKSSQLDEVLEKLERHNERKEKLKQQLKGKEVELEEIRKAYSTLNRKWHDKGELLCHLETQVKEVKEKFENKEKKLKAERDKSIELQKNAMEKLHSMDDAFKRQVDAIVEAHQAEIAQLANEKQKCIDSANLKVHQIEKEMRELLEETCKNKKTMEAKIKQLAFALNEIQQDM.

LRR repeat units lie at residues 44–65, 66–87, 88–109, 110–131, and 136–157; these read TLHA…DHIW, NLQH…NTLT, KLCT…EELI, NLTR…IPLH, and KLRY…LQCM. The LRRCT domain maps to 175–218; that stretch reads NPVCRLPGYRAVILQTLPQLRILDCKNIFGEPVNLTEINSSQLQ. A disordered region spans residues 316–345; that stretch reads DNVLEKDPRPKRDTDITSESDYGNRKECNR. Residues 318–330 show a composition bias toward basic and acidic residues; the sequence is VLEKDPRPKRDTD. Residues 421–647 are a coiled coil; sequence NTYQSLVEQL…DLENEFRIAL (227 aa).

Belongs to the LRRCC1 family.

It is found in the cytoplasm. The protein localises to the cytoskeleton. It localises to the microtubule organizing center. The protein resides in the centrosome. Its subcellular location is the centriole. In terms of biological role, required for the organization of the mitotic spindle. Maintains the structural integrity of centrosomes during mitosis. This is Leucine-rich repeat and coiled-coil domain-containing protein 1 (LRRCC1) from Homo sapiens (Human).